The following is a 426-amino-acid chain: Serine--tRNA ligase (426 aa).

235-237 contributes to the L-serine binding site; sequence TAE. 266 to 268 is a binding site for ATP; sequence RRE. Position 289 (glutamate 289) interacts with L-serine. 353–356 is an ATP binding site; the sequence is EISS. Serine 389 provides a ligand contact to L-serine.

It belongs to the class-II aminoacyl-tRNA synthetase family. Type-1 seryl-tRNA synthetase subfamily. In terms of assembly, homodimer. The tRNA molecule binds across the dimer.

Its subcellular location is the cytoplasm. It carries out the reaction tRNA(Ser) + L-serine + ATP = L-seryl-tRNA(Ser) + AMP + diphosphate + H(+). It catalyses the reaction tRNA(Sec) + L-serine + ATP = L-seryl-tRNA(Sec) + AMP + diphosphate + H(+). It participates in aminoacyl-tRNA biosynthesis; selenocysteinyl-tRNA(Sec) biosynthesis; L-seryl-tRNA(Sec) from L-serine and tRNA(Sec): step 1/1. Its function is as follows. Catalyzes the attachment of serine to tRNA(Ser). Is also able to aminoacylate tRNA(Sec) with serine, to form the misacylated tRNA L-seryl-tRNA(Sec), which will be further converted into selenocysteinyl-tRNA(Sec). The chain is Serine--tRNA ligase from Nostoc punctiforme (strain ATCC 29133 / PCC 73102).